We begin with the raw amino-acid sequence, 394 residues long: Actin-related protein 2 (394 aa).

M1 carries the post-translational modification N-acetylmethionine. ATP-binding positions include 160–162 (GDG) and 214–218 (RMIKE). K299 is modified (N6-acetyllysine). Position 305–310 (305–310 (GGSTMY)) interacts with ATP. The residue at position 322 (K322) is an N6-acetyllysine.

It belongs to the actin family. ARP2 subfamily. In terms of assembly, component of the Arp2/3 complex composed of ACTR2/ARP2, ACTR3/ARP3, ARPC1B/p41-ARC, ARPC2/p34-ARC, ARPC3/p21-ARC, ARPC4/p20-ARC and ARPC5/p16-ARC. Interacts with AVIL.

It is found in the cytoplasm. The protein resides in the cytoskeleton. The protein localises to the cell projection. It localises to the nucleus. Functionally, ATP-binding component of the Arp2/3 complex, a multiprotein complex that mediates actin polymerization upon stimulation by nucleation-promoting factor (NPF). The Arp2/3 complex mediates the formation of branched actin networks in the cytoplasm, providing the force for cell motility. Seems to contact the pointed end of the daughter actin filament. In podocytes, required for the formation of lamellipodia downstream of AVIL and PLCE1 regulation. In addition to its role in the cytoplasmic cytoskeleton, the Arp2/3 complex also promotes actin polymerization in the nucleus, thereby regulating gene transcription and repair of damaged DNA. The Arp2/3 complex promotes homologous recombination (HR) repair in response to DNA damage by promoting nuclear actin polymerization, leading to drive motility of double-strand breaks (DSBs). The chain is Actin-related protein 2 (ACTR2) from Pongo abelii (Sumatran orangutan).